The primary structure comprises 159 residues: CASP-like protein 5C1 (159 aa).

At Met1 to Arg6 the chain is on the cytoplasmic side. A helical membrane pass occupies residues Ser7–Phe29. Topologically, residues Ser30–Ala48 are extracellular. A helical transmembrane segment spans residues Phe49 to Ile69. Topologically, residues Asp70 to Cys94 are cytoplasmic. The chain crosses the membrane as a helical span at residues Ala95–Leu117. Residues His118 to Ala134 lie on the Extracellular side of the membrane. A helical transmembrane segment spans residues Met135 to Val155. Residues Ala156–Trp159 are Cytoplasmic-facing.

The protein belongs to the Casparian strip membrane proteins (CASP) family. Homodimer and heterodimers.

The protein resides in the cell membrane. This chain is CASP-like protein 5C1, found in Zea mays (Maize).